A 350-amino-acid chain; its full sequence is 26S proteasome non-ATPase regulatory subunit 8 (350 aa).

Positions 1–24 are disordered; it reads MFIKGRAPRAPPRERRRATRGGLR. Phosphoserine is present on Ser-106. Positions 162–331 constitute a PCI domain; the sequence is PSFERYMAQL…QQKPEDTTIP (170 aa). A Glycyl lysine isopeptide (Lys-Gly) (interchain with G-Cter in SUMO2) cross-link involves residue Lys-297.

Belongs to the proteasome subunit S14 family. In terms of assembly, component of the 19S proteasome regulatory particle complex. The 26S proteasome consists of a 20S core particle (CP) and two 19S regulatory subunits (RP). The regulatory particle is made of a lid composed of 9 subunits including PSMD8, a base containing 6 ATPases and few additional components. Interacts with DDI2. Interacts with TASOR.

Component of the 26S proteasome, a multiprotein complex involved in the ATP-dependent degradation of ubiquitinated proteins. This complex plays a key role in the maintenance of protein homeostasis by removing misfolded or damaged proteins, which could impair cellular functions, and by removing proteins whose functions are no longer required. Therefore, the proteasome participates in numerous cellular processes, including cell cycle progression, apoptosis, or DNA damage repair. The chain is 26S proteasome non-ATPase regulatory subunit 8 (PSMD8) from Homo sapiens (Human).